The primary structure comprises 412 residues: L-cysteine:1D-myo-inositol 2-amino-2-deoxy-alpha-D-glucopyranoside ligase (412 aa).

Residue Cys-43 coordinates Zn(2+). L-cysteinyl-5'-AMP-binding positions include 43–46 (CGIT), Thr-58, and 81–83 (NVT). The 'HIGH' region signature appears at 45-55 (ITPYDATHLGH). Residues 186 to 191 (ERGGDP) carry the 'ERGGDP' region motif. Trp-227 lines the L-cysteinyl-5'-AMP pocket. Cys-231 contacts Zn(2+). 249–251 (GND) is a binding site for L-cysteinyl-5'-AMP. His-256 serves as a coordination point for Zn(2+). Ile-283 lines the L-cysteinyl-5'-AMP pocket. The short motif at 289–293 (KMSKS) is the 'KMSKS' region element.

This sequence belongs to the class-I aminoacyl-tRNA synthetase family. MshC subfamily. As to quaternary structure, monomer. Zn(2+) serves as cofactor.

The enzyme catalyses 1D-myo-inositol 2-amino-2-deoxy-alpha-D-glucopyranoside + L-cysteine + ATP = 1D-myo-inositol 2-(L-cysteinylamino)-2-deoxy-alpha-D-glucopyranoside + AMP + diphosphate + H(+). Functionally, catalyzes the ATP-dependent condensation of GlcN-Ins and L-cysteine to form L-Cys-GlcN-Ins. The protein is L-cysteine:1D-myo-inositol 2-amino-2-deoxy-alpha-D-glucopyranoside ligase of Salinispora arenicola (strain CNS-205).